Reading from the N-terminus, the 457-residue chain is Beta-1,4-mannosyltransferase egh (457 aa).

6 consecutive transmembrane segments (helical) span residues 8-28 (LLHC…SGGI), 35-55 (FTLV…LYLL), 57-77 (FLTL…VFYN), 346-366 (LLGI…NIIF), 378-398 (VDFV…FGVI), and 415-435 (VLGA…AVIW).

Belongs to the glycosyltransferase 2 family.

Its subcellular location is the membrane. Functionally, glycosyltransferase with a proposed role in glycosphingolipid biosynthesis. Neurogenic protein implicated in epithelial development. Critical component of a differential oocyte-follicle cell adhesive system. The polypeptide is Beta-1,4-mannosyltransferase egh (egh) (Drosophila melanogaster (Fruit fly)).